The sequence spans 412 residues: Cysteate synthase (412 aa).

Lys105 carries the post-translational modification N6-(pyridoxal phosphate)lysine. 2 residues coordinate pyridoxal 5'-phosphate: Asn131 and Thr382.

This sequence belongs to the threonine synthase family. Cysteate synthase subfamily. In terms of assembly, homotrimer. It depends on pyridoxal 5'-phosphate as a cofactor.

The enzyme catalyses O-phospho-L-serine + sulfite + H(+) = L-cysteate + phosphate. The protein operates within cofactor biosynthesis; coenzyme M biosynthesis. Functionally, specifically catalyzes the beta-elimination of phosphate from L-phosphoserine and the beta-addition of sulfite to the dehydroalanine intermediate to produce L-cysteate. The polypeptide is Cysteate synthase (Methanocorpusculum labreanum (strain ATCC 43576 / DSM 4855 / Z)).